Here is a 125-residue protein sequence, read N- to C-terminus: Crustacean hyperglycemic hormones 5 (125 aa).

Residues 1-34 (MKPGNTSFNMVSFRMVWTAMMATLLVAGASSAGT) form the signal peptide. Intrachain disulfides connect Cys58-Cys94, Cys74-Cys90, and Cys77-Cys103. Val123 bears the Valine amide mark.

Belongs to the arthropod CHH/MIH/GIH/VIH hormone family. In terms of tissue distribution, produced by the medulla terminalis X-organ in the eyestalks and transported to the sinus gland where they are stored and released.

The protein resides in the secreted. Functionally, hormone found in the sinus gland of isopods and decapods which controls the blood sugar level. Has a secretagogue action over the amylase released from the midgut gland. May act as a stress hormone and may be involved in the control of molting and reproduction. The sequence is that of Crustacean hyperglycemic hormones 5 from Penaeus japonicus (Kuruma prawn).